The following is a 239-amino-acid chain: U-scoloptoxin(11)-Sm3a (239 aa).

The first 16 residues, 1 to 16 (MINFLLLVLILSVLES), serve as a signal peptide directing secretion.

The protein belongs to the scoloptoxin-11 family. Post-translationally, contains 9 disulfide bonds. In terms of tissue distribution, expressed by the venom gland.

The protein resides in the secreted. This Scolopendra morsitans (Tanzanian blue ringleg centipede) protein is U-scoloptoxin(11)-Sm3a.